We begin with the raw amino-acid sequence, 229 residues long: Potassium/proton antiporter CemA (229 aa).

Helical transmembrane passes span Ala-6 to Cys-26, Ile-107 to Gly-127, Phe-152 to Leu-172, and Ile-189 to Ile-209.

Belongs to the CemA family.

It is found in the plastid. The protein resides in the chloroplast inner membrane. It carries out the reaction K(+)(in) + H(+)(out) = K(+)(out) + H(+)(in). In terms of biological role, contributes to K(+)/H(+) antiport activity by supporting proton efflux to control proton extrusion and homeostasis in chloroplasts in a light-dependent manner to modulate photosynthesis. Prevents excessive induction of non-photochemical quenching (NPQ) under continuous-light conditions. Indirectly promotes efficient inorganic carbon uptake into chloroplasts. The protein is Potassium/proton antiporter CemA of Aethionema grandiflorum (Persian stone-cress).